Here is a 358-residue protein sequence, read N- to C-terminus: Methylthioribose-1-phosphate isomerase (358 aa).

Residues 54–56 (RGA), Arg-96, and Gln-205 each bind substrate. Asp-246 serves as the catalytic Proton donor. Residue 256-257 (NK) coordinates substrate.

This sequence belongs to the eIF-2B alpha/beta/delta subunits family. MtnA subfamily.

The enzyme catalyses 5-(methylsulfanyl)-alpha-D-ribose 1-phosphate = 5-(methylsulfanyl)-D-ribulose 1-phosphate. The protein operates within amino-acid biosynthesis; L-methionine biosynthesis via salvage pathway; L-methionine from S-methyl-5-thio-alpha-D-ribose 1-phosphate: step 1/6. In terms of biological role, catalyzes the interconversion of methylthioribose-1-phosphate (MTR-1-P) into methylthioribulose-1-phosphate (MTRu-1-P). The protein is Methylthioribose-1-phosphate isomerase of Pseudomonas savastanoi pv. phaseolicola (strain 1448A / Race 6) (Pseudomonas syringae pv. phaseolicola (strain 1448A / Race 6)).